Here is a 211-residue protein sequence, read N- to C-terminus: Suppressor of cytokine signaling 1 (211 aa).

Positions 1 to 53 (MVAHNQVAADNAVSTAAEPRRRPEPSSSSSSSPAAPARPRPCPAVPAPAPGDT) are disordered. Positions 25-35 (PSSSSSSSPAA) are enriched in low complexity. Positions 36-49 (PARPRPCPAVPAPA) are enriched in pro residues. Residues 55-66 (FRTFRSHADYRR) are kinase inhibitory region (KIR). The tract at residues 67–78 (ITRASALLDACG) is extended SH2 subdomain (ESS). The 96-residue stretch at 79–174 (FYWGPLSVHG…PLRQRRVRPL (96 aa)) folds into the SH2 domain. One can recognise an SOCS box domain in the interval 161 to 210 (MLGAPLRQRRVRPLQELCRQRIVATVGRENLARIPLNPVLRDYLSSFPFQ). Residues 173 to 182 (PLQELCRQRI) form an interaction with Elongin BC complex region.

It belongs to the SOCS1 family. In terms of assembly, interacts with multiple activated signaling proteins of the tyrosine kinase signaling pathway including JAK family kinases, TEC, KIT, GRB2 and VAV. Binding to JAKs is mediated through the KIR and SH2 domains to a phosphorylated tyrosine residue within the JAK JH1 domain. Binds the SH3 domain of GRB2 via diproline determinants in the N-terminus, and the N-terminal regulatory domain of VAV. Interacts with the Elongin BC complex (ELOB and ELOC). Component of an ECS CBC(SOCS1) E3 ubiquitin-protein ligase complex which contains Elongin BC, CUL5, RBX1 and SOCS1. Interacts (via SH2 domain and SOCS box) with TRIM8. Interacts with AXL, CUL2 and FGFR3. Interacts with INSR. Interacts with TRIM8. Interacts with DCUN1D1. Interacts with IFNGR1. As to expression, expressed in all tissues with high expression in spleen, small intestine and peripheral blood leukocytes.

It is found in the nucleus. Its subcellular location is the cytoplasmic vesicle. It participates in protein modification; protein ubiquitination. Essential negative regulator of type I and type II interferon (IFN) signaling, as well as that of other cytokines, including IL2, IL4, IL6 and leukemia inhibitory factor (LIF). Downregulates cytokine signaling by inhibiting the JAK/STAT signaling pathway. Acts by binding to JAK proteins and to IFNGR1 and inhibiting their kinase activity. In vitro, suppresses Tec protein-tyrosine activity. Regulates IFN-gamma (IFNG)-mediated sensory neuron survival. Probable substrate recognition component of an ECS (Elongin BC-CUL2/5-SOCS-box protein) E3 ubiquitin ligase complex which mediates the ubiquitination and subsequent proteasomal degradation of target proteins. The sequence is that of Suppressor of cytokine signaling 1 (SOCS1) from Homo sapiens (Human).